The following is a 91-amino-acid chain: Sec-independent protein translocase protein TatA (91 aa).

A helical transmembrane segment spans residues 1–21; the sequence is MGIFDWKHWIVILIVVVLVFG. Residues 42–91 form a disordered region; it reads AMNDDDKPAEQPAPQPQQAQAAPQGSPLNQPHTIDAQAHKVDEPIRKDQV. A compositionally biased stretch (low complexity) spans 51–65; sequence EQPAPQPQQAQAAPQ. Residues 78–91 are compositionally biased toward basic and acidic residues; the sequence is QAHKVDEPIRKDQV.

The protein belongs to the TatA/E family. As to quaternary structure, the Tat system comprises two distinct complexes: a TatABC complex, containing multiple copies of TatA, TatB and TatC subunits, and a separate TatA complex, containing only TatA subunits. Substrates initially bind to the TatABC complex, which probably triggers association of the separate TatA complex to form the active translocon.

It is found in the cell inner membrane. Its function is as follows. Part of the twin-arginine translocation (Tat) system that transports large folded proteins containing a characteristic twin-arginine motif in their signal peptide across membranes. TatA could form the protein-conducting channel of the Tat system. In Pseudomonas savastanoi pv. phaseolicola (strain 1448A / Race 6) (Pseudomonas syringae pv. phaseolicola (strain 1448A / Race 6)), this protein is Sec-independent protein translocase protein TatA.